The chain runs to 366 residues: DNA repair protein RAD51 homolog 3 (366 aa).

Residues Met-1 to Val-117 form a required for Holliday junction resolution activity region. Position 11 is a phosphoserine (Ser-11). An interaction with RAD51B, RAD51D and XRCC3 region spans residues Ser-70 to Met-127. Residue Gly-116–Thr-123 coordinates ATP. The disordered stretch occupies residues Arg-338–Cys-366. The segment covering Thr-343 to Asn-354 has biased composition (polar residues). Positions Arg-356 to Arg-360 match the Nuclear localization signal motif.

The protein belongs to the RecA family. RAD51 subfamily. In terms of assembly, part of the RAD51 paralog protein complexes BCDX2 and CX3; the complexes have a ring-like structure arranged into a flat disc around a central channel. The BCDX2 complex consits of RAD51B, RAD51C, RAD51D and XRCC2; the CX3 complex consists of RAD51C and XRCC3. The BCDX2 subcomplex RAD51B:RAD51C interacts with RAD51. Interacts with SWSAP1; involved in homologous recombination repair. Interacts directly with PALB2 which may serve as a scaffold for a HR complex containing PALB2, BRCA2, RAD51C, RAD51 and XRCC3. Interacts with HELQ.

Its subcellular location is the nucleus. The protein localises to the cytoplasm. It is found in the perinuclear region. The protein resides in the mitochondrion. Functionally, essential for the homologous recombination (HR) pathway of DNA repair. Involved in the homologous recombination repair (HRR) pathway of double-stranded DNA breaks arising during DNA replication or induced by DNA-damaging agents. Part of the RAD51 paralog protein complexes BCDX2 and CX3 which act at different stages of the BRCA1-BRCA2-dependent HR pathway. Upon DNA damage, BCDX2 seems to act downstream of BRCA2 recruitment and upstream of RAD51 recruitment; CX3 seems to act downstream of RAD51 recruitment; both complexes bind predominantly to the intersection of the four duplex arms of the Holliday junction (HJ) and to junction of replication forks. The BCDX2 complex was originally reported to bind single-stranded DNA, single-stranded gaps in duplex DNA and specifically to nicks in duplex DNA. The BCDX2 subcomplex RAD51B:RAD51C exhibits single-stranded DNA-dependent ATPase activity suggesting an involvement in early stages of the HR pathway. Involved in RAD51 foci formation in response to DNA damage suggesting an involvement in early stages of HR probably in the invasion step. Has an early function in DNA repair in facilitating phosphorylation of the checkpoint kinase CHEK2 and thereby transduction of the damage signal, leading to cell cycle arrest and HR activation. Participates in branch migration and HJ resolution and thus is important for processing HR intermediates late in the DNA repair process; the function may be linked to the CX3 complex. Part of a PALB2-scaffolded HR complex containing BRCA2 and which is thought to play a role in DNA repair by HR. Protects RAD51 from ubiquitin-mediated degradation that is enhanced following DNA damage. Plays a role in regulating mitochondrial DNA copy number under conditions of oxidative stress in the presence of RAD51 and XRCC3. Contributes to DNA cross-link resistance, sister chromatid cohesion and genomic stability. Involved in maintaining centrosome number in mitosis. The chain is DNA repair protein RAD51 homolog 3 (RAD51C) from Cricetulus griseus (Chinese hamster).